The chain runs to 360 residues: N6-Methyl-AMP deaminase (360 aa).

Residues histidine 23 and histidine 25 each contribute to the Zn(2+) site. N(6)-methyl-AMP-binding positions include histidine 25, asparagine 27, histidine 73, 105 to 108 (STPR), aspartate 147, and glycine 180. Histidine 207 lines the Zn(2+) pocket. N(6)-methyl-AMP is bound by residues glutamate 210, aspartate 292, and aspartate 293. Glutamate 210 functions as the Proton donor in the catalytic mechanism. Aspartate 292 is a Zn(2+) binding site.

Belongs to the metallo-dependent hydrolases superfamily. Adenosine and AMP deaminases family. Monomer. The cofactor is Zn(2+).

It carries out the reaction N(6)-methyl-AMP + H2O + H(+) = IMP + methylamine. Catalyzes the hydrolysis of the free cytosolic methylated adenosine nucleotide N(6)-methyl-AMP (N6-mAMP) to produce inositol monophosphate (IMP) and methylamine. Is required for the catabolism of cytosolic N6-mAMP, which is derived from the degradation of mRNA containing N6-methylated adenine (m6A). The polypeptide is N6-Methyl-AMP deaminase (Mapda) (Mus musculus (Mouse)).